The chain runs to 71 residues: UPF0346 protein SZO_05010 (71 aa).

This sequence belongs to the UPF0346 family.

In Streptococcus equi subsp. zooepidemicus (strain H70), this protein is UPF0346 protein SZO_05010.